Consider the following 690-residue polypeptide: Guanylate cyclase soluble subunit alpha-1 (690 aa).

At serine 266 the chain carries Phosphoserine. In terms of domain architecture, Guanylate cyclase spans threonine 480 to glutamate 607.

The protein belongs to the adenylyl cyclase class-4/guanylyl cyclase family. The active enzyme is formed by a heterodimer of an alpha and a beta subunit. Heterodimer with GUCY1B1. The cofactor is Mg(2+). Mn(2+) serves as cofactor.

It localises to the cytoplasm. It catalyses the reaction GTP = 3',5'-cyclic GMP + diphosphate. With respect to regulation, activated by nitric oxide in the presence of magnesium or manganese ions. In Rattus norvegicus (Rat), this protein is Guanylate cyclase soluble subunit alpha-1 (Gucy1a1).